Consider the following 602-residue polypeptide: Elongation factor 4 (602 aa).

Residues 2-184 (KHIRNFSIIA…AIVAKVPAPR (183 aa)) form the tr-type G domain. GTP is bound by residues 14 to 19 (DHGKST) and 131 to 134 (NKMD).

Belongs to the TRAFAC class translation factor GTPase superfamily. Classic translation factor GTPase family. LepA subfamily.

The protein resides in the cell inner membrane. The enzyme catalyses GTP + H2O = GDP + phosphate + H(+). In terms of biological role, required for accurate and efficient protein synthesis under certain stress conditions. May act as a fidelity factor of the translation reaction, by catalyzing a one-codon backward translocation of tRNAs on improperly translocated ribosomes. Back-translocation proceeds from a post-translocation (POST) complex to a pre-translocation (PRE) complex, thus giving elongation factor G a second chance to translocate the tRNAs correctly. Binds to ribosomes in a GTP-dependent manner. The protein is Elongation factor 4 of Verminephrobacter eiseniae (strain EF01-2).